A 321-amino-acid chain; its full sequence is Lipoyl synthase (321 aa).

[4Fe-4S] cluster contacts are provided by C60, C65, C71, C86, C90, C93, and S299. Residues 72–288 (WEKKHATFMI…ETIGRTKGFL (217 aa)) form the Radical SAM core domain.

This sequence belongs to the radical SAM superfamily. Lipoyl synthase family. Requires [4Fe-4S] cluster as cofactor.

It localises to the cytoplasm. It catalyses the reaction [[Fe-S] cluster scaffold protein carrying a second [4Fe-4S](2+) cluster] + N(6)-octanoyl-L-lysyl-[protein] + 2 oxidized [2Fe-2S]-[ferredoxin] + 2 S-adenosyl-L-methionine + 4 H(+) = [[Fe-S] cluster scaffold protein] + N(6)-[(R)-dihydrolipoyl]-L-lysyl-[protein] + 4 Fe(3+) + 2 hydrogen sulfide + 2 5'-deoxyadenosine + 2 L-methionine + 2 reduced [2Fe-2S]-[ferredoxin]. It participates in protein modification; protein lipoylation via endogenous pathway; protein N(6)-(lipoyl)lysine from octanoyl-[acyl-carrier-protein]: step 2/2. Catalyzes the radical-mediated insertion of two sulfur atoms into the C-6 and C-8 positions of the octanoyl moiety bound to the lipoyl domains of lipoate-dependent enzymes, thereby converting the octanoylated domains into lipoylated derivatives. This Brucella anthropi (strain ATCC 49188 / DSM 6882 / CCUG 24695 / JCM 21032 / LMG 3331 / NBRC 15819 / NCTC 12168 / Alc 37) (Ochrobactrum anthropi) protein is Lipoyl synthase.